Consider the following 351-residue polypeptide: Cytoplasmic dynein 2 light intermediate chain 1 (351 aa).

The disordered stretch occupies residues 303–335 (GTLKAVQDPARDPQYAESEVDEMRVQKDQELEH). Residues 323–335 (DEMRVQKDQELEH) show a composition bias toward basic and acidic residues.

Belongs to the dynein light intermediate chain family. In terms of assembly, light intermediate chain of the cytoplasmic dynein complex 2, a multisubunit complex composed at least of eleven different proteins. The cytoplasmic dynein 2 complex consists of two catalytic heavy chains (HCs) and a number of non-catalytic subunits presented by intermediate chains (ICs), light intermediate chains (LICs) and light chains (LCs). Among them, a heavy chain (DYNC2H1), two intermediate chains (DYNC2I2 and DYNC2I1), a light intermediate chain (DYNC2LI1), and a light chain (DYNLT2B) are unique to the dynein-2 complex, but a subset of light chains are also shared by dynein-1 and dynein-2 complexes. Dynein-2 complex is built around two copies of cytoplasmic dynein 2 heavy chain 1 (DYNC2H1). The C-terminal region forms the motor domain, which converts the energy from ATP hydrolysis into movement. Its N-terminal region forms the tail, an extended structure that binds the other subunits and holds the two heavy chains in a homodimer. Interacts with DYNC2H1 (via N-terminus); this interaction stabilizes the dynein-2 complex structure. In terms of tissue distribution, specifically expressed by ciliated cells in brain, lung, spleen, testis and kidney (at protein level). Enriched in the ependymal layer lining the lateral ventricles (at protein level).

The protein resides in the cytoplasm. The protein localises to the cell projection. Its subcellular location is the cilium. It localises to the cytoskeleton. It is found in the cilium basal body. The protein resides in the cilium axoneme. The protein localises to the microtubule organizing center. Its subcellular location is the centrosome. In terms of biological role, acts as one of several non-catalytic accessory components of the cytoplasmic dynein 2 complex (dynein-2 complex), a motor protein complex that drives the movement of cargos along microtubules within cilia and flagella in concert with the intraflagellar transport (IFT) system, facilitating the assembly of these organelles. Involved in the regulation of ciliary length. The protein is Cytoplasmic dynein 2 light intermediate chain 1 (Dync2li1) of Mus musculus (Mouse).